The chain runs to 94 residues: ATP synthase subunit c (94 aa).

A run of 2 helical transmembrane segments spans residues 15–35 (IGVG…WGLI) and 58–78 (FIFA…AMWF).

Belongs to the ATPase C chain family. F-type ATPases have 2 components, F(1) - the catalytic core - and F(0) - the membrane proton channel. F(1) has five subunits: alpha(3), beta(3), gamma(1), delta(1), epsilon(1). F(0) has three main subunits: a(1), b(2) and c(10-14). The alpha and beta chains form an alternating ring which encloses part of the gamma chain. F(1) is attached to F(0) by a central stalk formed by the gamma and epsilon chains, while a peripheral stalk is formed by the delta and b chains.

It is found in the cell inner membrane. Its function is as follows. F(1)F(0) ATP synthase produces ATP from ADP in the presence of a proton or sodium gradient. F-type ATPases consist of two structural domains, F(1) containing the extramembraneous catalytic core and F(0) containing the membrane proton channel, linked together by a central stalk and a peripheral stalk. During catalysis, ATP synthesis in the catalytic domain of F(1) is coupled via a rotary mechanism of the central stalk subunits to proton translocation. Functionally, key component of the F(0) channel; it plays a direct role in translocation across the membrane. A homomeric c-ring of between 10-14 subunits forms the central stalk rotor element with the F(1) delta and epsilon subunits. The chain is ATP synthase subunit c from Hydrogenovibrio crunogenus (strain DSM 25203 / XCL-2) (Thiomicrospira crunogena).